The primary structure comprises 186 residues: uncharacterized protein (186 aa).

This sequence belongs to the MG032/MG096/MG288 family.

This is an uncharacterized protein from Mycoplasma pneumoniae (strain ATCC 29342 / M129 / Subtype 1) (Mycoplasmoides pneumoniae).